A 169-amino-acid chain; its full sequence is uncharacterized protein (169 aa).

This is an uncharacterized protein from Saccharomyces cerevisiae (strain ATCC 204508 / S288c) (Baker's yeast).